Here is an 86-residue protein sequence, read N- to C-terminus: MMRVLIVTAVFTFFLVLTSSGHDEDNEQRNILEGMFLDRAIETPKGLEEKRACGILHDNCVYVPAQNPCCRGLQCRYGKCLVQVGR.

A signal peptide spans 1 to 21; sequence MMRVLIVTAVFTFFLVLTSSG. A propeptide spanning residues 22 to 49 is cleaved from the precursor; sequence HDEDNEQRNILEGMFLDRAIETPKGLEE. 3 disulfide bridges follow: Cys53/Cys70, Cys60/Cys75, and Cys69/Cys80. Val84 is subject to Valine amide.

As to expression, expressed by the venom gland.

The protein resides in the secreted. Functionally, possesses strong antiplasmodial activity against the intra-erythrocyte stage of P.falciparum in vitro. IC(50) for inhibiting P.falciparum growth is 1.59 uM. Interacts with infected and healthy erythrocytes. Does not lyse erythrocytes, is not cytotoxic to nucleated mammalian cells, and does not inhibit neuromuscular function. Has neither antibacterial nor antifungal activity. This is U1-theraphotoxin-Pc1a from Psalmopoeus cambridgei (Trinidad chevron tarantula).